A 203-amino-acid chain; its full sequence is A-type ATP synthase subunit E (203 aa).

The protein belongs to the V-ATPase E subunit family. In terms of assembly, has multiple subunits with at least A(3), B(3), C, D, E, F, H, I and proteolipid K(x).

It localises to the cell membrane. Component of the A-type ATP synthase that produces ATP from ADP in the presence of a proton gradient across the membrane. The protein is A-type ATP synthase subunit E of Methanococcus maripaludis (strain C7 / ATCC BAA-1331).